Consider the following 469-residue polypeptide: Citrate synthase, mitochondrial (469 aa).

A mitochondrion-targeting transit peptide spans 1–30; it reads MSFLTVSRLAPKLLNSKNATYFLVAARNAS. Residues H304 and H350 contribute to the active site. R359 lines the oxaloacetate pocket. Residue D405 is part of the active site. Oxaloacetate contacts are provided by R431 and R451.

Belongs to the citrate synthase family. Homodimer.

It is found in the mitochondrion matrix. It carries out the reaction oxaloacetate + acetyl-CoA + H2O = citrate + CoA + H(+). Its pathway is carbohydrate metabolism; tricarboxylic acid cycle; isocitrate from oxaloacetate: step 1/2. Key enzyme of the Krebs tricarboxylic acid cycle which catalyzes the synthesis of citrate from acetyl coenzyme A and oxaloacetate. The protein is Citrate synthase, mitochondrial (cs) of Kajikia audax (Striped marlin).